Here is an 801-residue protein sequence, read N- to C-terminus: Cadherin-20 (801 aa).

The first 34 residues, 1–34 (MWTTGRMSNAKSWLGLGTSLYFWALMDLTATVLS), serve as a signal peptide directing secretion. Residues 35–59 (STPMPEVELETLFSGRSQSHQRSKR) constitute a propeptide that is removed on maturation. The Extracellular segment spans residues 60–619 (SWVWNQFFVL…AYLLPVSLSR (560 aa)). Cadherin domains follow at residues 61-165 (WVWN…EPKF), 166-274 (LDGP…PPRF), 275-389 (PQKH…PPVF), 390-494 (EPGF…APEF), and 494-610 (FPRF…SPEA). The N-linked (GlcNAc...) asparagine glycan is linked to N261. N-linked (GlcNAc...) asparagine glycans are attached at residues N420, N461, and N542. The helical transmembrane segment at 620–640 (GALIAILACIFVLLVLVLLIL) threads the bilayer. At 641 to 801 (SMRRHRKQPY…GASEGPAPLW (161 aa)) the chain is on the cytoplasmic side.

Expressed in brain. Highest level of expression in the retina. In embryo it is synthesized by the forebrain, anterior neural ridge, developing visual system, primitive external granular layer of the cerebellum and a subset of neural crest cells likely to develop into melanoblasts.

Its subcellular location is the cell membrane. Functionally, cadherins are calcium-dependent cell adhesion proteins. They preferentially interact with themselves in a homophilic manner in connecting cells; cadherins may thus contribute to the sorting of heterogeneous cell types. This chain is Cadherin-20 (Cdh20), found in Mus musculus (Mouse).